The following is a 417-amino-acid chain: Inactive GDSL esterase/lipase-like protein 25 (417 aa).

A signal peptide spans 1 to 50 (MLLIPSFTANSNEPPPSKLSLSDLSMAILKSHFFLLFPLLLLHFHTVSFA). N-linked (GlcNAc...) asparagine glycans are attached at residues Asn160, Asn308, and Asn311. His331 is a catalytic residue.

The protein belongs to the 'GDSL' lipolytic enzyme family. As to quaternary structure, interacts with the PYK10 complex and TGG2, but not with TGG1 or PEN2. As to expression, expressed throughout the seedling, rosette leaves, roots, inflorescence and imbibed seed, but not in pollen.

It is found in the vacuole. It localises to the endoplasmic reticulum. Functionally, involved in organization of the endomembrane system and is required for endoplasmic reticulum morphology and organelle distribution. May act by inhibiting the formation of PYK10 complex by binding to GLL23 and exporting it from the ER. Required for proper subcellular localization of myrosinase TGG2. Has no lipase or esterase activity. This Arabidopsis thaliana (Mouse-ear cress) protein is Inactive GDSL esterase/lipase-like protein 25 (MVP1).